The sequence spans 350 residues: MTDQAFVTLTTNDAYAKGALVLGSSLKQHRTTRRLVVLATPQVSDSMRKVLETVFDEVIMVDVLDSGDSAHLTLMKRPELGVTLTKLHCWSLTQYSKCVFMDADTLVLANIDDLFDREELSAAPDPGWPDCFNSGVFVYQPSVETYNQLLHLASEQGSFDGGDQGILNTFFSSWATTDIRKHLPFIYNLSSISIYSYLPAFKVFGASAKVVHFLGRVKPWNYTYDPKTKSVKSEAHDPNMTHPEFLILWWNIFTTNVLPLLQQFGLVKDTCSYVNVLSDLVYTLAFSCGFCRKEDVSGAISHLSLGEIPAMAQPFVSSEERKERWEQGQADYMGADSFDNIKRKLDTYLQ.

Thr2 is modified (N-acetylthreonine). Leu9, Thr11, Asn12, and Tyr15 together coordinate UDP. UDP-alpha-D-glucose-binding residues include Leu9, Thr11, Asn12, and Tyr15. Ser44 carries the phosphoserine modification. A UDP-binding site is contributed by Arg77. UDP-alpha-D-glucose-binding residues include Arg77, Lys86, Asp102, Ala103, Asp104, Asn133, Ser134, Asp160, Asp163, and Gln164. The UDP site is built by Asp102, Ala103, and Asp104. A Mn(2+)-binding site is contributed by Asp102. Asp104 lines the Mn(2+) pocket. An O-linked (Glc...) tyrosine glycan is attached at Tyr195. UDP-binding residues include His212, Gly215, and Lys218. His212 contacts Mn(2+). Positions 215 and 218 each coordinate UDP-alpha-D-glucose. Positions 301–333 (SHLSLGEIPAMAQPFVSSEERKERWEQGQADYM) are interaction with GYS1.

The protein belongs to the glycosyltransferase 8 family. Glycogenin subfamily. As to quaternary structure, part of the GYS1-GYG1 complex, a heterooctamer composed of a tetramer of GYS1 and 2 dimers of GYG1, where each GYS1 protomer binds to one GYG1 subunit (via GYG1 C-terminus); the GYS1 tetramer may dissociate from GYG1 dimers to continue glycogen polymerization on its own. May also form a heterooctamer complex with GYS2 (via GYG1 C-terminus). Requires Mn(2+) as cofactor. In terms of processing, self-glycosylated by the transfer of glucose residues from UDP-glucose to itself, forming an alpha-1,4-glycan of around 10 residues attached to Tyr-195. Post-translationally, phosphorylated. As to expression, highly expressed in skeletal muscle and heart, with lower levels in brain, lung, kidney and pancreas.

The protein resides in the cytoplasm. Its subcellular location is the nucleus. It carries out the reaction L-tyrosyl-[glycogenin] + UDP-alpha-D-glucose = alpha-D-glucosyl-L-tyrosyl-[glycogenin] + UDP + H(+). The catalysed reaction is [1,4-alpha-D-glucosyl](n)-L-tyrosyl-[glycogenin] + UDP-alpha-D-glucose = [1,4-alpha-D-glucosyl](n+1)-L-tyrosyl-[glycogenin] + UDP + H(+). Its pathway is glycan biosynthesis; glycogen biosynthesis. With respect to regulation, inhibited by palladium ions. Its function is as follows. Glycogenin participates in the glycogen biosynthetic process along with glycogen synthase and glycogen branching enzyme. It catalyzes the formation of a short alpha (1,4)-glucosyl chain covalently attached via a glucose 1-O-tyrosyl linkage to internal tyrosine residues and these chains act as primers for the elongation reaction catalyzed by glycogen synthase. The protein is Glycogenin-1 of Homo sapiens (Human).